Here is an 863-residue protein sequence, read N- to C-terminus: Bifunctional uridylyltransferase/uridylyl-removing enzyme (863 aa).

Positions 1–328 (MLFSPTLSSL…SSNQDTVIDQ (328 aa)) are uridylyltransferase. Residues 329 to 687 (LDDDFQLINQ…ISNRFSLGGT (359 aa)) form a uridylyl-removing region. Residues 446-568 (VDEHTLRVML…MQNQVRLDYL (123 aa)) enclose the HD domain. 2 consecutive ACT domains span residues 688–764 (EVFI…KLPA) and 794–863 (EMEL…QQIR).

It belongs to the GlnD family. It depends on Mg(2+) as a cofactor.

The catalysed reaction is [protein-PII]-L-tyrosine + UTP = [protein-PII]-uridylyl-L-tyrosine + diphosphate. It catalyses the reaction [protein-PII]-uridylyl-L-tyrosine + H2O = [protein-PII]-L-tyrosine + UMP + H(+). With respect to regulation, uridylyltransferase (UTase) activity is inhibited by glutamine, while glutamine activates uridylyl-removing (UR) activity. In terms of biological role, modifies, by uridylylation and deuridylylation, the PII regulatory proteins (GlnB and homologs), in response to the nitrogen status of the cell that GlnD senses through the glutamine level. Under low glutamine levels, catalyzes the conversion of the PII proteins and UTP to PII-UMP and PPi, while under higher glutamine levels, GlnD hydrolyzes PII-UMP to PII and UMP (deuridylylation). Thus, controls uridylylation state and activity of the PII proteins, and plays an important role in the regulation of nitrogen assimilation and metabolism. In Haemophilus influenzae (strain ATCC 51907 / DSM 11121 / KW20 / Rd), this protein is Bifunctional uridylyltransferase/uridylyl-removing enzyme.